The sequence spans 120 residues: Large ribosomal subunit protein uL18 (120 aa).

It belongs to the universal ribosomal protein uL18 family. As to quaternary structure, part of the 50S ribosomal subunit; part of the 5S rRNA/L5/L18/L25 subcomplex. Contacts the 5S and 23S rRNAs.

In terms of biological role, this is one of the proteins that bind and probably mediate the attachment of the 5S RNA into the large ribosomal subunit, where it forms part of the central protuberance. This is Large ribosomal subunit protein uL18 from Herminiimonas arsenicoxydans.